A 213-amino-acid chain; its full sequence is Urease accessory protein UreE (213 aa).

The interval 170–213 (EHHGRSHSHSHSHSHDHDHDHDHDHDHDHQHGPSCSHGHGHGHR) is disordered. Basic and acidic residues predominate over residues 182-200 (HSHDHDHDHDHDHDHDHQH).

It belongs to the UreE family.

It is found in the cytoplasm. In terms of biological role, involved in urease metallocenter assembly. Binds nickel. Probably functions as a nickel donor during metallocenter assembly. This Burkholderia thailandensis (strain ATCC 700388 / DSM 13276 / CCUG 48851 / CIP 106301 / E264) protein is Urease accessory protein UreE.